The following is a 376-amino-acid chain: Putative clathrin assembly protein At1g25240 (376 aa).

The ENTH domain maps to 25-156 (KTSFRNPDLD…FFLSDQIRRR (132 aa)).

The protein resides in the membrane. It localises to the clathrin-coated pit. Its subcellular location is the golgi apparatus. The protein localises to the cytoplasmic vesicle. It is found in the clathrin-coated vesicle. The protein is Putative clathrin assembly protein At1g25240 of Arabidopsis thaliana (Mouse-ear cress).